Here is a 303-residue protein sequence, read N- to C-terminus: Probable cell division protein WhiA (303 aa).

A DNA-binding region (H-T-H motif) is located at residues 272–303 (SIQQLADSLSRPLTKSGVNHRLRKINKIADEL).

Belongs to the WhiA family.

In terms of biological role, involved in cell division and chromosome segregation. The chain is Probable cell division protein WhiA from Streptococcus sanguinis (strain SK36).